A 199-amino-acid polypeptide reads, in one-letter code: Small ribosomal subunit protein eS1 (199 aa).

Belongs to the eukaryotic ribosomal protein eS1 family.

This Pyrococcus horikoshii (strain ATCC 700860 / DSM 12428 / JCM 9974 / NBRC 100139 / OT-3) protein is Small ribosomal subunit protein eS1.